We begin with the raw amino-acid sequence, 376 residues long: MYTLLKKTGKVRRGRFETVHGTIETPVFMNVGTLAAIKGAVSSMDLKEINCQVELSNTYHLSLRPGDDVVKKLGGLHKFMNWDRPILTDSGGFQVFSLAEIRKIKEEGVYFNSHIDGRKIFMGPEESMKIQSNLASTIAMAFDECVENPSPREYVERSVERTTRWLVRCKEELDRLNSLPDTINKKQMLFGINQGGVYDDIRIEHAKTIAKMDLDGYAIGGLAVGETHEEMYRIIDAVVPHLPQDKPIYLMGVGTPSNILEAVSRGVDFFDCVLPARNGRHGHVFTKHGKINLRNEKFELDASPIDEGCQCPTCKHYSRAYIRHLFKAKEMLAMRLCVLHNLYFYNTLMEDIRNAIDADCFEEFKNEKLKAWAGKA.

Aspartate 89 serves as the catalytic Proton acceptor. Residues 89 to 93 (DSGGF), aspartate 143, glutamine 194, and glycine 221 contribute to the substrate site. Positions 252-258 (GVGTPSN) are RNA binding. The Nucleophile role is filled by aspartate 271. The interval 276-280 (ARNGR) is RNA binding; important for wobble base 34 recognition. Cysteine 309, cysteine 311, cysteine 314, and histidine 340 together coordinate Zn(2+).

The protein belongs to the queuine tRNA-ribosyltransferase family. In terms of assembly, homodimer. Within each dimer, one monomer is responsible for RNA recognition and catalysis, while the other monomer binds to the replacement base PreQ1. The cofactor is Zn(2+).

It carries out the reaction 7-aminomethyl-7-carbaguanine + guanosine(34) in tRNA = 7-aminomethyl-7-carbaguanosine(34) in tRNA + guanine. Its pathway is tRNA modification; tRNA-queuosine biosynthesis. Functionally, catalyzes the base-exchange of a guanine (G) residue with the queuine precursor 7-aminomethyl-7-deazaguanine (PreQ1) at position 34 (anticodon wobble position) in tRNAs with GU(N) anticodons (tRNA-Asp, -Asn, -His and -Tyr). Catalysis occurs through a double-displacement mechanism. The nucleophile active site attacks the C1' of nucleotide 34 to detach the guanine base from the RNA, forming a covalent enzyme-RNA intermediate. The proton acceptor active site deprotonates the incoming PreQ1, allowing a nucleophilic attack on the C1' of the ribose to form the product. After dissociation, two additional enzymatic reactions on the tRNA convert PreQ1 to queuine (Q), resulting in the hypermodified nucleoside queuosine (7-(((4,5-cis-dihydroxy-2-cyclopenten-1-yl)amino)methyl)-7-deazaguanosine). The polypeptide is Queuine tRNA-ribosyltransferase (Clostridium acetobutylicum (strain ATCC 824 / DSM 792 / JCM 1419 / IAM 19013 / LMG 5710 / NBRC 13948 / NRRL B-527 / VKM B-1787 / 2291 / W)).